The primary structure comprises 260 residues: 33 kDa inner dynein arm light chain, axonemal (260 aa).

Residues 1-66 are disordered; that stretch reads MIPPNASLVK…PVESQKAQQT (66 aa). A coiled-coil region spans residues 177–260; that stretch reads MRKALQAEQG…LEGIIAPNKK (84 aa).

It belongs to the inner dynein arm light chain family. In terms of processing, may undergo some post-translational modifications that shift its mobility on SDS gels.

In terms of biological role, may play a dynamic role in flagellar motility. The sequence is that of 33 kDa inner dynein arm light chain, axonemal from Strongylocentrotus purpuratus (Purple sea urchin).